Reading from the N-terminus, the 1357-residue chain is MSEFHRLYFDELLFDFPDLVKVQKDSYASFVGGGDTGFSISDIFASVFPVNDGYGRASLEFVSCRMGEPKHDEYGCVERGITYSAPLRAILRLVVFGDETSGEGSEGVSTEPAVKDVREQEIYMGDIPIMSKNGTFIINGVERVVVSQMHRAPGVFFDNDKARSISGKLNYIARIIPYRGSWLDFEFDAKDVLYFRIDKKRKLPVTFLLRALGLSNKDIFAQFCEVSECRLTKDGKWTVCFVPEKFKGVRLQYDLINAETGELVLAKGNRISIVLARNLYAKGLRYCYMDLEVMKDMYLADDLVSTKGEVLLPHGTKLTKEHVAKLEFLDVDSIKLVELKGNYVFSTVLQYDCSYEEAMLSIYRVVRPGEIPSVESAEKLFESLFFSPERYDLLNVGRIRLNAKFNLSHDESLTVLTKEDIFCTVKELALLQREVGDVDDIDHLGNRRVRSVGEFMDNQFRIGLVRMAKVIVENMATADFDTVMPCEMINSKILGAVIREFFMSSALSQFMDQTNPLSEITHKRRISALGPGGLNRGRAGFEVRDVHTTHYGRICATETPEGATIGLINSLAIYAKINKYGFIETPYRYVRDGRVTDEVTYLSAIDEIKANICQASVRVDEEGYIVDDLVYCRRNYENVFIPRSEVQFADVSAKQIVSVAASLIPFLENDDANRALMGSNMQRQAVPLIMPEAPLVGTGMEGYVARGSGAVIVAKRAGVVQYIDARNIVVASESKDDFWIDSYTLCKFRKSNHNTCIHQRCVVHQGQRVKKGDILADGPAIQKGELALGRNLVVAFLSWRGYNFEDSVVISSNVVRDDLFTSVHLEGFECVVRDTRLGPEEITRDVSGVAEEFLHCLDEFGIACVGANVEAGDVLVGKVTPKSSSPVTPEEKLLRAIFGEKAIDVKDSSLYLPPGVSGCVVDVKVLQRRGIEKVGRALLIEKQAIDAEKTRRDHELAVLTNYIYSLLKEMLVGKVALSTLAPISKGDLITEEALEKIDRENWWKISVDGISSIKLLRQRFVDRFDEINKTYEENFEKIRGDDDLAQGVLMVVKVFVAVKHTLQPGDKMSGRHGNKGVISRIVPAEDTPYLADGTPVDIILNPLGVPSRMNVGQILETHLGWAAYNLGKKISKLLDEGNYSEVKSLVLEIYKNDRKMMARLNEMTDAEIVEYSRSLRGGVPVAASVFEGPKTDEIERLLVLAGKDPSGQEVLYDGVTGEKFDRKVTVGCKYMLKLHHLVNDKIHARSIGSTVDTQQPLGGKSHFGGQRFGEMECWALQAYGATFALQEMLTIKSDDVVGRVNVYDSIVRGDNDFYYGVPESFNVMMNELRALCLNVEFCSDLEKKKDFGDLALAASGQ.

It belongs to the RNA polymerase beta chain family. As to quaternary structure, the RNAP catalytic core consists of 2 alpha, 1 beta, 1 beta' and 1 omega subunit. When a sigma factor is associated with the core the holoenzyme is formed, which can initiate transcription.

The enzyme catalyses RNA(n) + a ribonucleoside 5'-triphosphate = RNA(n+1) + diphosphate. Its function is as follows. DNA-dependent RNA polymerase catalyzes the transcription of DNA into RNA using the four ribonucleoside triphosphates as substrates. In Neorickettsia sennetsu (Ehrlichia sennetsu), this protein is DNA-directed RNA polymerase subunit beta.